The sequence spans 375 residues: Response regulator aspartate phosphatase E (375 aa).

Positions N24 to A95 form a coiled coil. 6 TPR repeats span residues Y96–I129, I177–L210, A219–I252, P258–F291, M297–P330, and E333–I366.

This sequence belongs to the Rap family.

The protein resides in the cytoplasm. With respect to regulation, phosphatase activity is inhibited by the phosphatase regulator PhrE. In terms of biological role, involved in the regulation of sporulation. Acts as a phosphatase that specifically dephosphorylates the sporulation initiation phosphotransferase Spo0F and inhibits its activity. Probably plays a dispensable role in the overall context of sporulation initiation. In Bacillus subtilis (strain 168), this protein is Response regulator aspartate phosphatase E (rapE).